The primary structure comprises 337 residues: Angiopoietin-related protein 7 (337 aa).

An N-terminal signal peptide occupies residues 1 to 21 (MLRETWLCVILVAFVSHPVWL). Residues 30 to 110 (QLKAAGCCEE…DIMQLQAAQT (81 aa)) are a coiled coil. N49 carries N-linked (GlcNAc...) asparagine glycosylation. A Fibrinogen C-terminal domain is found at 113 to 334 (QTSADAIYDC…RVEMKIRPEA (222 aa)). Residues C122 and C153 are joined by a disulfide bond. N244 and N258 each carry an N-linked (GlcNAc...) asparagine glycan. Cysteines 276 and 289 form a disulfide. N320 carries an N-linked (GlcNAc...) asparagine glycan.

In terms of assembly, homotetramer; disulfide-linked.

It localises to the secreted. Has a role in the formation and organization of the extracellular matrix. In the eye, it functions as a mediator of dexamethasone-induced matrix deposition in the trabecular meshwork, the tissue responsible for the outflow of the ocular aqueous humor and for the maintenance of intraocular pressure. Is a negative regulator of angiogenesis in the cornea, and plays a major role in maintaining corneal avascularity and transparency. In Mus musculus (Mouse), this protein is Angiopoietin-related protein 7 (Angptl7).